The following is an 828-amino-acid chain: Protein ELFN1 (828 aa).

An N-terminal signal peptide occupies residues 1–27; sequence MAGRGWGALWVCVAAATLLHAGGLARA. The Extracellular segment spans residues 28–418; sequence DCWLIEGDKG…VPSPSTATHY (391 aa). The N-linked (GlcNAc...) asparagine glycan is linked to asparagine 59. LRR repeat units follow at residues 61 to 82, 85 to 106, 109 to 130, 133 to 154, and 157 to 178; these read TIVD…SLSR, NLTY…AFSG, NLQV…MLRG, KLEY…SFWE, and NIVN…TFAG. N-linked (GlcNAc...) asparagine glycans are attached at residues asparagine 85, asparagine 90, and asparagine 122. The LRRCT domain maps to 190–252; the sequence is NPFYCSCELL…LSKLQSVCTE (63 aa). Asparagine 210 carries an N-linked (GlcNAc...) asparagine glycan. The segment at 259–291 is disordered; the sequence is VVGPPRPASGRSQPGRSPPPPPPPEPSDMPCAD. Over residues 274-285 the composition is skewed to pro residues; it reads RSPPPPPPPEPS. Residues 312 to 399 enclose the Fibronectin type-III domain; that stretch reads QAEARPLIKV…HNHTCLTICL (88 aa). One copy of the LRR 6 repeat lies at 318 to 342; sequence LIKVKQLTQNSATITVQLPSPFHRM. N-linked (GlcNAc...) asparagine glycosylation occurs at asparagine 376. Residues 419–439 traverse the membrane as a helical segment; sequence IMTILGCLFGMVLVLGAVYYC. Over 440–828 the chain is Cytoplasmic; the sequence is LRRRRRQEEK…WKGVSAQHKS (389 aa). Serine 461 carries the post-translational modification Phosphoserine. Disordered regions lie at residues 517-552, 624-649, and 696-732; these read TPKA…QSSV, LQRH…VRSP, and KGRQ…GLGR. Basic and acidic residues predominate over residues 529-541; that stretch reads RTGDPPERRDCEL. Over residues 632-649 the composition is skewed to low complexity; it reads AAGPPRASTSSSGSVRSP. At serine 645 the chain carries Phosphoserine. Over residues 696–705 the composition is skewed to basic and acidic residues; that stretch reads KGRQYGEHRH. Positions 713 to 727 are enriched in pro residues; sequence AEPPAPPGPPPPPPH.

In terms of assembly, interacts with PPP1CA.

It localises to the membrane. Its subcellular location is the cell projection. The protein resides in the dendrite. Postsynaptic protein that regulates circuit dynamics in the central nervous system by modulating the temporal dynamics of interneuron recruitment. Specifically present in excitatory synapses onto oriens-lacunosum molecular (OLM) interneurons and acts as a regulator of presynaptic release probability to direct the formation of highly facilitating pyramidal-OLM synapses. Inhibits phosphatase activity of protein phosphatase 1 (PP1) complexes. In Homo sapiens (Human), this protein is Protein ELFN1 (ELFN1).